Consider the following 239-residue polypeptide: Increased recombination centers protein 22-1 (239 aa).

A signal peptide spans methionine 1 to glycine 19. Topologically, residues tyrosine 20–leucine 161 are lumenal. A helical transmembrane segment spans residues isoleucine 162–isoleucine 182. Residues tryptophan 183 to asparagine 239 lie on the Cytoplasmic side of the membrane. The span at alanine 201–serine 213 shows a compositional bias: low complexity. A disordered region spans residues alanine 201–threonine 222.

It belongs to the IRC22 family.

It localises to the endoplasmic reticulum membrane. In terms of biological role, is probably involved in a pathway contributing to genomic integrity. The sequence is that of Increased recombination centers protein 22-1 (IRC22-1) from Candida albicans (strain WO-1) (Yeast).